A 108-amino-acid polypeptide reads, in one-letter code: Thioredoxin C-2 (108 aa).

Residues 2-108 enclose the Thioredoxin domain; sequence SATIVNTTDE…KLAAFIDQNI (107 aa). Residues C33 and C36 are joined by a disulfide bond.

Belongs to the thioredoxin family.

In terms of biological role, participates in various redox reactions through the reversible oxidation of its active center dithiol to a disulfide and catalyzes dithiol-disulfide exchange reactions. This Corynebacterium nephridii protein is Thioredoxin C-2.